Here is a 313-residue protein sequence, read N- to C-terminus: Formimidoylglutamase (313 aa).

Residues histidine 130, aspartate 155, histidine 157, aspartate 159, aspartate 241, and aspartate 243 each contribute to the Mn(2+) site.

Belongs to the arginase family. The cofactor is Mn(2+).

It carries out the reaction N-formimidoyl-L-glutamate + H2O = formamide + L-glutamate. It participates in amino-acid degradation; L-histidine degradation into L-glutamate; L-glutamate from N-formimidoyl-L-glutamate (hydrolase route): step 1/1. Its function is as follows. Catalyzes the conversion of N-formimidoyl-L-glutamate to L-glutamate and formamide. The protein is Formimidoylglutamase of Salmonella newport (strain SL254).